Here is a 349-residue protein sequence, read N- to C-terminus: MSLGPVILDIEGTQLTANDKKKLRHPLVGGVILFTRNYSSLAQLMHLTAEIHALRTPPLLVAVDHEGGRVQRFREDFTRLPPMRELGRIWDEHPAQARHLAHEAGYVLAAELRAAGVDFSFTPVLDMDYGQSSVIRDRAFHRDPQAIAELAHSLMSGLKSAGMAAVGKHFPGHGYIEADSHFEMPVDERTYAQIEMDDLIPFRKMIGFGLTGMMPAHVIYPKVDALPAGFSEVWLKKVLRGELGFEGCIFSDDLNMAGAAFAGNPVERAQKALHAGCDMVLLCNNPEAAEMLLAELHWDLPALGVIRLARMRGRPNPDSLVKLHENPNFVSAVEKIAGIGVRSGELPLV.

Substrate contacts are provided by residues Asp-64, Arg-72, Arg-138, and 168–169 (KH). His-181 acts as the Proton donor/acceptor in catalysis. Asp-252 functions as the Nucleophile in the catalytic mechanism.

The protein belongs to the glycosyl hydrolase 3 family. NagZ subfamily.

It localises to the cytoplasm. It carries out the reaction Hydrolysis of terminal non-reducing N-acetyl-D-hexosamine residues in N-acetyl-beta-D-hexosaminides.. It functions in the pathway cell wall biogenesis; peptidoglycan recycling. In terms of biological role, plays a role in peptidoglycan recycling by cleaving the terminal beta-1,4-linked N-acetylglucosamine (GlcNAc) from peptide-linked peptidoglycan fragments, giving rise to free GlcNAc, anhydro-N-acetylmuramic acid and anhydro-N-acetylmuramic acid-linked peptides. The polypeptide is Beta-hexosaminidase (Nitrosospira multiformis (strain ATCC 25196 / NCIMB 11849 / C 71)).